Here is a 332-residue protein sequence, read N- to C-terminus: HPr kinase/phosphorylase (332 aa).

Residues H153 and K174 contribute to the active site. 168 to 175 is an ATP binding site; the sequence is GKSGLGKS. Residue S175 coordinates Mg(2+). The Proton acceptor; for phosphorylation activity. Proton donor; for dephosphorylation activity role is filled by D192. Residues 217–226 are important for the catalytic mechanism of both phosphorylation and dephosphorylation; that stretch reads MEIRGLGVVD. Position 218 (E218) interacts with Mg(2+). The active site involves R259. The important for the catalytic mechanism of dephosphorylation stretch occupies residues 280 to 285; the sequence is PIFPGK.

Belongs to the HPrK/P family. In terms of assembly, homohexamer. It depends on Mg(2+) as a cofactor.

It carries out the reaction [HPr protein]-L-serine + ATP = [HPr protein]-O-phospho-L-serine + ADP + H(+). The enzyme catalyses [HPr protein]-O-phospho-L-serine + phosphate + H(+) = [HPr protein]-L-serine + diphosphate. Catalyzes the ATP- as well as the pyrophosphate-dependent phosphorylation of a specific serine residue in HPr, a phosphocarrier protein of the phosphoenolpyruvate-dependent sugar phosphotransferase system (PTS). HprK/P also catalyzes the pyrophosphate-producing, inorganic phosphate-dependent dephosphorylation (phosphorolysis) of seryl-phosphorylated HPr (P-Ser-HPr). The protein is HPr kinase/phosphorylase of Chlorobium phaeovibrioides (strain DSM 265 / 1930) (Prosthecochloris vibrioformis (strain DSM 265)).